A 274-amino-acid polypeptide reads, in one-letter code: NH(3)-dependent NAD(+) synthetase (274 aa).

46–53 (GISGGQDS) is a binding site for ATP. Aspartate 52 is a binding site for Mg(2+). Residue arginine 140 participates in deamido-NAD(+) binding. Threonine 160 is a binding site for ATP. Glutamate 165 provides a ligand contact to Mg(2+). Lysine 173 and aspartate 180 together coordinate deamido-NAD(+). ATP is bound by residues lysine 189 and threonine 211. 260–261 (HK) contacts deamido-NAD(+).

This sequence belongs to the NAD synthetase family. As to quaternary structure, homodimer.

The catalysed reaction is deamido-NAD(+) + NH4(+) + ATP = AMP + diphosphate + NAD(+) + H(+). It participates in cofactor biosynthesis; NAD(+) biosynthesis; NAD(+) from deamido-NAD(+) (ammonia route): step 1/1. Its function is as follows. Catalyzes the ATP-dependent amidation of deamido-NAD to form NAD. Uses ammonia as a nitrogen source. In Streptococcus pneumoniae serotype 2 (strain D39 / NCTC 7466), this protein is NH(3)-dependent NAD(+) synthetase.